The following is a 280-amino-acid chain: Tryptophan synthase alpha chain (280 aa).

Catalysis depends on proton acceptor residues Glu49 and Asp60.

The protein belongs to the TrpA family. In terms of assembly, tetramer of two alpha and two beta chains.

The catalysed reaction is (1S,2R)-1-C-(indol-3-yl)glycerol 3-phosphate + L-serine = D-glyceraldehyde 3-phosphate + L-tryptophan + H2O. The protein operates within amino-acid biosynthesis; L-tryptophan biosynthesis; L-tryptophan from chorismate: step 5/5. Functionally, the alpha subunit is responsible for the aldol cleavage of indoleglycerol phosphate to indole and glyceraldehyde 3-phosphate. This chain is Tryptophan synthase alpha chain, found in Corynebacterium glutamicum (strain R).